Consider the following 592-residue polypeptide: MTTDVKEKATFKLLDLIDSVTGKKSLLLERDLSGILGQIVTTNTLQEHGIPQVYWFNENIPNDIEKKTIYLCRPTYENAKLVATHVRQFQRDMLRIESTVIVLPTSNILFETVLQEEGVFGELLVTEWPLHAVPLDKDLLSLELGPEKLEESLLQRSTDALIDFERTHGRFPRVSGRGPYAAKMLELLEKTYQEEATINFGKVEGEISALYDSVLLVDRSLDRITPFLTQLTYFGFLDEILGIQQMNVKLPSSLVNRNEASNTGPMKKFSLSSSSSQITKEIRDINFNCIGPYLSKIARKLSSDFEGRRQAKTVNQIRDFVSKLGSLQSEHTSLNIHTGLAETLVQHTKNNYFQKLLQLQHLLVSHADSFTQFNLLDEIIYAEAPVEEVFRVLCLASITTNGLRRKDIDHYRREITQTYGYYHLLTFQALIDAGLLRLRQSTNISLQKSLSYSTWLNTYPLVKDEVDEQNPEDIAYTYSGYGPLSVHIAYDILKGRDNEEKILKLQNMPGTYVDKWTLDQEKVMPKNLKTNVPGKRRVLVFFIGGCTYTELAAFRLLQEKEDLYEFTFMTTGMVTGSSLIRAFIPNIESLNE.

It belongs to the STXBP/unc-18/SEC1 family.

Essential for vacuolar biogenesis, maturation and function. Involved in the sorting of vacuolar proteins from the Golgi apparatus and their targeting to the vacuole. This Schizosaccharomyces pombe (strain 972 / ATCC 24843) (Fission yeast) protein is Vacuolar protein sorting-associated protein 33 (vps33).